A 388-amino-acid polypeptide reads, in one-letter code: Oligogalacturonate lyase (388 aa).

The protein resides in the periplasm. It catalyses the reaction 4-(4-deoxy-alpha-D-galact-4-enuronosyl)-D-galacturonate = 2 5-dehydro-4-deoxy-D-glucuronate. It participates in glycan metabolism; pectin degradation; 2-dehydro-3-deoxy-D-gluconate from pectin: step 3/5. Its function is as follows. Involved in degradation of pectin, which causes soft-rod disease in plants. In Dickeya dadantii (strain 3937) (Erwinia chrysanthemi (strain 3937)), this protein is Oligogalacturonate lyase (ogl).